We begin with the raw amino-acid sequence, 82 residues long: ATP synthase subunit c, chloroplastic (82 aa).

2 consecutive transmembrane segments (helical) span residues 7-27 and 57-77; these read GASV…PGIG and LAFM…LLFA.

It belongs to the ATPase C chain family. In terms of assembly, F-type ATPases have 2 components, F(1) - the catalytic core - and F(0) - the membrane proton channel. F(1) has five subunits: alpha(3), beta(3), gamma(1), delta(1), epsilon(1). F(0) has four main subunits: a(1), b(1), b'(1) and c(10-14). The alpha and beta chains form an alternating ring which encloses part of the gamma chain. F(1) is attached to F(0) by a central stalk formed by the gamma and epsilon chains, while a peripheral stalk is formed by the delta, b and b' chains.

It localises to the plastid. The protein localises to the chloroplast thylakoid membrane. Its function is as follows. F(1)F(0) ATP synthase produces ATP from ADP in the presence of a proton or sodium gradient. F-type ATPases consist of two structural domains, F(1) containing the extramembraneous catalytic core and F(0) containing the membrane proton channel, linked together by a central stalk and a peripheral stalk. During catalysis, ATP synthesis in the catalytic domain of F(1) is coupled via a rotary mechanism of the central stalk subunits to proton translocation. Key component of the F(0) channel; it plays a direct role in translocation across the membrane. A homomeric c-ring of between 10-14 subunits forms the central stalk rotor element with the F(1) delta and epsilon subunits. This Emiliania huxleyi (Coccolithophore) protein is ATP synthase subunit c, chloroplastic.